Reading from the N-terminus, the 373-residue chain is Zinc finger protein CONSTANS-LIKE 10 (373 aa).

Positions 5, 8, 28, 33, 48, 51, 71, and 76 each coordinate Zn(2+). The B box-type 1; atypical zinc-finger motif lies at 5–47 (CDFCGEQRSMVYCRSDAACLCLSCDRNVHSANALSKRHSRTLV). The B box-type 2; atypical zinc-finger motif lies at 48-92 (CERCNAQPASVRCSDERVSLCQNCDWSGHDGKNSTTTSHHKRQTI). Residues 152–172 (PETSSAAQGMDHSSVPENSSM) form a disordered region. The 43-residue stretch at 316 to 358 (RNNAVMRYKEKKKARKFDKRVRYVSRKERADVRRRVKGRFVKS) folds into the CCT domain.

This sequence belongs to the CONSTANS family.

It is found in the nucleus. This is Zinc finger protein CONSTANS-LIKE 10 (COL10) from Arabidopsis thaliana (Mouse-ear cress).